The primary structure comprises 23 residues: Fimbrial protein (23 aa).

Residues C8 and C21 are joined by a disulfide bond.

This sequence belongs to the N-Me-Phe pilin family. In terms of assembly, the pili are polar flexible filaments of about 5.4 nanometers diameter and 2.5 micrometers average length; they consist of only a single polypeptide chain arranged in a helical configuration of five subunits per turn in the assembled pilus.

It is found in the fimbrium. This chain is Fimbrial protein (pil), found in Pseudomonas aeruginosa.